The primary structure comprises 532 residues: CTP synthase (532 aa).

Residues 1–265 (MKYIVVTGGV…DEYLMRKLNL (265 aa)) form an amidoligase domain region. A CTP-binding site is contributed by serine 12. Serine 12 is a UTP binding site. ATP contacts are provided by residues 13 to 18 (GLGKGI) and aspartate 70. The Mg(2+) site is built by aspartate 70 and glutamate 140. CTP contacts are provided by residues 147 to 149 (DIE), 186 to 191 (KTKPTQ), and lysine 222. UTP is bound by residues 186–191 (KTKPTQ) and lysine 222. The region spanning 289–529 (SIAIVGKYVD…VRAALKYRRE (241 aa)) is the Glutamine amidotransferase type-1 domain. Residue glycine 349 participates in L-glutamine binding. Cysteine 376 (nucleophile; for glutamine hydrolysis) is an active-site residue. L-glutamine contacts are provided by residues 377–380 (FGFQ), glutamate 400, and arginine 457. Catalysis depends on residues histidine 502 and glutamate 504.

It belongs to the CTP synthase family. Homotetramer.

The enzyme catalyses UTP + L-glutamine + ATP + H2O = CTP + L-glutamate + ADP + phosphate + 2 H(+). It catalyses the reaction L-glutamine + H2O = L-glutamate + NH4(+). The catalysed reaction is UTP + NH4(+) + ATP = CTP + ADP + phosphate + 2 H(+). It functions in the pathway pyrimidine metabolism; CTP biosynthesis via de novo pathway; CTP from UDP: step 2/2. With respect to regulation, allosterically activated by GTP, when glutamine is the substrate; GTP has no effect on the reaction when ammonia is the substrate. The allosteric effector GTP functions by stabilizing the protein conformation that binds the tetrahedral intermediate(s) formed during glutamine hydrolysis. Inhibited by the product CTP, via allosteric rather than competitive inhibition. In terms of biological role, catalyzes the ATP-dependent amination of UTP to CTP with either L-glutamine or ammonia as the source of nitrogen. Regulates intracellular CTP levels through interactions with the four ribonucleotide triphosphates. The chain is CTP synthase from Archaeoglobus fulgidus (strain ATCC 49558 / DSM 4304 / JCM 9628 / NBRC 100126 / VC-16).